Reading from the N-terminus, the 308-residue chain is tRNA dimethylallyltransferase (308 aa).

Residue 14–21 coordinates ATP; it reads GPTASGKT. Residue 16 to 21 coordinates substrate; that stretch reads TASGKT. Interaction with substrate tRNA stretches follow at residues 39–42, 163–167, and 244–249; these read DSAL, QRLSR, and RCVGYR.

This sequence belongs to the IPP transferase family. In terms of assembly, monomer. Mg(2+) serves as cofactor.

The catalysed reaction is adenosine(37) in tRNA + dimethylallyl diphosphate = N(6)-dimethylallyladenosine(37) in tRNA + diphosphate. Functionally, catalyzes the transfer of a dimethylallyl group onto the adenine at position 37 in tRNAs that read codons beginning with uridine, leading to the formation of N6-(dimethylallyl)adenosine (i(6)A). The polypeptide is tRNA dimethylallyltransferase (Shewanella loihica (strain ATCC BAA-1088 / PV-4)).